The chain runs to 256 residues: Imidazole glycerol phosphate synthase subunit HisF (256 aa).

Residues D12 and D131 contribute to the active site.

The protein belongs to the HisA/HisF family. As to quaternary structure, heterodimer of HisH and HisF.

Its subcellular location is the cytoplasm. The enzyme catalyses 5-[(5-phospho-1-deoxy-D-ribulos-1-ylimino)methylamino]-1-(5-phospho-beta-D-ribosyl)imidazole-4-carboxamide + L-glutamine = D-erythro-1-(imidazol-4-yl)glycerol 3-phosphate + 5-amino-1-(5-phospho-beta-D-ribosyl)imidazole-4-carboxamide + L-glutamate + H(+). It participates in amino-acid biosynthesis; L-histidine biosynthesis; L-histidine from 5-phospho-alpha-D-ribose 1-diphosphate: step 5/9. IGPS catalyzes the conversion of PRFAR and glutamine to IGP, AICAR and glutamate. The HisF subunit catalyzes the cyclization activity that produces IGP and AICAR from PRFAR using the ammonia provided by the HisH subunit. In Pseudomonas putida (strain GB-1), this protein is Imidazole glycerol phosphate synthase subunit HisF.